A 203-amino-acid polypeptide reads, in one-letter code: Outer-membrane lipoprotein carrier protein (203 aa).

The first 21 residues, 1–21 (MKKLLVACCLLSGLISAHALA), serve as a signal peptide directing secretion.

This sequence belongs to the LolA family. In terms of assembly, monomer.

It localises to the periplasm. Participates in the translocation of lipoproteins from the inner membrane to the outer membrane. Only forms a complex with a lipoprotein if the residue after the N-terminal Cys is not an aspartate (The Asp acts as a targeting signal to indicate that the lipoprotein should stay in the inner membrane). This Yersinia enterocolitica serotype O:8 / biotype 1B (strain NCTC 13174 / 8081) protein is Outer-membrane lipoprotein carrier protein.